Here is a 632-residue protein sequence, read N- to C-terminus: Biosynthetic arginine decarboxylase (632 aa).

Lys101 carries the post-translational modification N6-(pyridoxal phosphate)lysine. Phe281–Tyr291 serves as a coordination point for substrate.

Belongs to the Orn/Lys/Arg decarboxylase class-II family. SpeA subfamily. It depends on Mg(2+) as a cofactor. Pyridoxal 5'-phosphate serves as cofactor.

The enzyme catalyses L-arginine + H(+) = agmatine + CO2. Its pathway is amine and polyamine biosynthesis; agmatine biosynthesis; agmatine from L-arginine: step 1/1. Catalyzes the biosynthesis of agmatine from arginine. This is Biosynthetic arginine decarboxylase from Escherichia coli O157:H7 (strain EC4115 / EHEC).